Reading from the N-terminus, the 279-residue chain is uncharacterized protein (279 aa).

The tract at residues 60-92 is disordered; it reads RKANKLNNKQDSTFFNSASGETNNTILPPGVKN. Residues 70-85 show a composition bias toward polar residues; sequence DSTFFNSASGETNNTI. The next 3 membrane-spanning stretches (helical) occupy residues 156-176, 202-222, and 237-257; these read IVGY…AVMN, ISIF…ILFL, and FIWI…LLMI.

Its subcellular location is the cell membrane. This is an uncharacterized protein from Mycoplasma genitalium (strain ATCC 33530 / DSM 19775 / NCTC 10195 / G37) (Mycoplasmoides genitalium).